Here is a 350-residue protein sequence, read N- to C-terminus: Flap endonuclease 1 (350 aa).

Residues 1–101 are N-domain; the sequence is MGVNIREVIP…LEIERRKRVK (101 aa). Mg(2+) contacts are provided by Asp30, Asp83, Glu155, Glu157, Asp176, Asp178, and Asp239. Residues 119-261 form an I-domain region; that stretch reads AARRYAQMAA…TALKMVKAHR (143 aa). Residues 340–348 are interaction with PCNA; that stretch reads QQMGLDAWL.

Belongs to the XPG/RAD2 endonuclease family. FEN1 subfamily. In terms of assembly, interacts with PCNA. PCNA stimulates the nuclease activity without altering cleavage specificity. It depends on Mg(2+) as a cofactor.

Its function is as follows. Structure-specific nuclease with 5'-flap endonuclease and 5'-3' exonuclease activities involved in DNA replication and repair. During DNA replication, cleaves the 5'-overhanging flap structure that is generated by displacement synthesis when DNA polymerase encounters the 5'-end of a downstream Okazaki fragment. Binds the unpaired 3'-DNA end and kinks the DNA to facilitate 5' cleavage specificity. Cleaves one nucleotide into the double-stranded DNA from the junction in flap DNA, leaving a nick for ligation. Also involved in the base excision repair (BER) pathway. Acts as a genome stabilization factor that prevents flaps from equilibrating into structures that lead to duplications and deletions. Also possesses 5'-3' exonuclease activity on nicked or gapped double-stranded DNA. In Hyperthermus butylicus (strain DSM 5456 / JCM 9403 / PLM1-5), this protein is Flap endonuclease 1.